Reading from the N-terminus, the 156-residue chain is MGRFISVSFGLLVVFLSLSGTGADCPSDWSSFKQYCYQIIKQLKTWEDAERFCMDQVKGAHLVSIESYREAVFVAQQLSENVKTTKYDVWIGLSVVNKGQQCSSEWSDGSSVSYENLVKPLSKKCFVLKKGTEFRKWFNVACEQKHLFMCKFLRPR.

An N-terminal signal peptide occupies residues 1-23; sequence MGRFISVSFGLLVVFLSLSGTGA. 3 disulfide bridges follow: Cys25-Cys36, Cys53-Cys150, and Cys125-Cys142. The 120-residue stretch at 32–151 folds into the C-type lectin domain; sequence FKQYCYQIIK…CEQKHLFMCK (120 aa).

This sequence belongs to the snaclec family. In terms of assembly, heteromultimer; disulfide-linked. As to expression, expressed by the venom gland.

The protein resides in the secreted. In terms of biological role, interferes with one step of hemostasis (modulation of platelet aggregation, or coagulation cascade, for example). The polypeptide is Snaclec stejaggregin-B subunit alpha (Trimeresurus stejnegeri (Chinese green tree viper)).